The chain runs to 506 residues: CTL-like protein DDB_G0269978 (506 aa).

N-linked (GlcNAc...) asparagine glycosylation is found at N15 and N41. A run of 12 helical transmembrane segments spans residues 91–111 (LLYS…TVIA), 126–146 (LQGL…FLIW), 161–181 (SFFS…GNGW), 182–202 (YSWA…YFAF), 226–246 (TLLV…IWLF), 256–276 (SYWT…LYWT), 279–299 (VITY…YFFA), 323–343 (FGSI…QFIC), 345–367 (GFAR…ALIF), 371–393 (LYTF…CNSS), 416–436 (ITML…VTMI), and 447–467 (WLYV…DIIF).

This sequence belongs to the CTL (choline transporter-like) family.

The protein localises to the membrane. The chain is CTL-like protein DDB_G0269978 from Dictyostelium discoideum (Social amoeba).